We begin with the raw amino-acid sequence, 230 residues long: MKLYVVPTPIGNLEDITIRAINILKSVKFIACEDTRRIQILLKHYNIEGKTLLSYYHPKEAIQIRKIISLIRKDEDVALVSDAGTPSISDPGFKLINACIKEDIPVEVLPGPCALITALVGSGLPTHSFMFLGFAPRKSQESFYKEVFSSDTGSYILYESPQRILDTLELISHIEPNITVAIARELTKMHEEYIRGNIKDVIEELKKRNNIKGEIVLVLSKENTLYQESL.

It belongs to the methyltransferase superfamily. RsmI family.

It localises to the cytoplasm. The enzyme catalyses cytidine(1402) in 16S rRNA + S-adenosyl-L-methionine = 2'-O-methylcytidine(1402) in 16S rRNA + S-adenosyl-L-homocysteine + H(+). Its function is as follows. Catalyzes the 2'-O-methylation of the ribose of cytidine 1402 (C1402) in 16S rRNA. This is Ribosomal RNA small subunit methyltransferase I from Hydrogenobaculum sp. (strain Y04AAS1).